The sequence spans 953 residues: Isoleucine--tRNA ligase (953 aa).

The 'HIGH' region signature appears at 57 to 67 (PYANGDIHIGH). L-isoleucyl-5'-AMP is bound at residue Glu-582. The 'KMSKS' region signature appears at 623–627 (KMSKS). Lys-626 contributes to the ATP binding site. Cys-916, Cys-919, Cys-936, and Cys-939 together coordinate Zn(2+).

It belongs to the class-I aminoacyl-tRNA synthetase family. IleS type 1 subfamily. In terms of assembly, monomer. The cofactor is Zn(2+).

Its subcellular location is the cytoplasm. It catalyses the reaction tRNA(Ile) + L-isoleucine + ATP = L-isoleucyl-tRNA(Ile) + AMP + diphosphate. In terms of biological role, catalyzes the attachment of isoleucine to tRNA(Ile). As IleRS can inadvertently accommodate and process structurally similar amino acids such as valine, to avoid such errors it has two additional distinct tRNA(Ile)-dependent editing activities. One activity is designated as 'pretransfer' editing and involves the hydrolysis of activated Val-AMP. The other activity is designated 'posttransfer' editing and involves deacylation of mischarged Val-tRNA(Ile). This chain is Isoleucine--tRNA ligase, found in Bordetella avium (strain 197N).